Here is a 194-residue protein sequence, read N- to C-terminus: Protein cholesin (194 aa).

A disordered region spans residues 1 to 83; sequence MAKQKRKVPE…RKKEERQRLR (83 aa). 2 positions are modified to phosphoserine: serine 23 and serine 59. Residues 61–83 show a composition bias toward basic and acidic residues; sequence EEQRVLERKLKKERKKEERQRLR. Phosphoserine is present on residues serine 97 and serine 175.

As to expression, secreted from the instestine, secretion is induced by feeding and cholesterol absorption.

Its subcellular location is the secreted. In terms of biological role, hormone secreted from the intestine in response to cholesterol, where it acts to inhibit cholesterol synthesis in the liver and VLDL secretion,leading to a reduction in circulating cholesterol levels. Acts through binding to its receptor, GPR146. This is Protein cholesin from Homo sapiens (Human).